The following is a 224-amino-acid chain: Cytidylate kinase (224 aa).

ATP is bound at residue 12 to 20; the sequence is GPSGAGKGT.

The protein belongs to the cytidylate kinase family. Type 1 subfamily.

The protein localises to the cytoplasm. It carries out the reaction CMP + ATP = CDP + ADP. The enzyme catalyses dCMP + ATP = dCDP + ADP. In Aliivibrio salmonicida (strain LFI1238) (Vibrio salmonicida (strain LFI1238)), this protein is Cytidylate kinase.